Consider the following 174-residue polypeptide: Centrosomal protein 20 (174 aa).

The tract at residues M1 to I104 is necessary and sufficient for homooligomerization and localization to centrosomes and pericentriolar satellites. Residues E49–V81 enclose the LisH domain. Residues G129–R174 form a disordered region. At S144 the chain carries Phosphoserine. Residues K147 to H167 show a composition bias toward basic and acidic residues.

It belongs to the CEP43 family. Homooligomer; probably required for localization to centrosomes. Forms a complex with KIAA0753/OFIP and OFD1; within this complex may stabilize the interaction between OFD1 and KIAA0753/OFIP. Interacts with PCM1; this interaction may be mediated by KIAA0753/OFIP. Interacts with PLK1 in later G1, S, G2 and M phases of the cell cycle; this interaction recruits PLK1 to centrosomes. As to expression, widely expressed. Detected in brain, heart, kidney, liver, lung, skeletal muscle, placenta and intestine.

The protein resides in the cytoplasm. Its subcellular location is the cytoskeleton. It localises to the microtubule organizing center. It is found in the centrosome. The protein localises to the centriole. The protein resides in the cell projection. Its subcellular location is the cilium. It localises to the cilium basal body. It is found in the cytoplasmic granule. The protein localises to the centriolar satellite. In terms of biological role, involved in the biogenesis of cilia. Required for the recruitment of PLK1 to centrosomes and S phase progression. This chain is Centrosomal protein 20, found in Homo sapiens (Human).